Here is a 249-residue protein sequence, read N- to C-terminus: Large ribosomal subunit protein uL22m (249 aa).

The transit peptide at 1–22 (MKYINQFMKISKGFLVPSSTIG) directs the protein to the mitochondrion. A disordered region spans residues 70–98 (ANQKDDSNRQQKEERVKERPRSRISFKKQ). Over residues 72-98 (QKDDSNRQQKEERVKERPRSRISFKKQ) the composition is skewed to basic and acidic residues.

This sequence belongs to the universal ribosomal protein uL22 family. In terms of assembly, component of the mitochondrial large ribosomal subunit (mt-LSU). Mature yeast 74S mitochondrial ribosomes consist of a small (37S) and a large (54S) subunit. The 37S small subunit contains a 15S ribosomal RNA (15S mt-rRNA) and at least 32 different proteins. The 54S large subunit contains a 21S rRNA (21S mt-rRNA) and at least 45 different proteins. uL22m forms the wall of the exit tunnel.

It is found in the mitochondrion. Functionally, component of the mitochondrial ribosome (mitoribosome), a dedicated translation machinery responsible for the synthesis of mitochondrial genome-encoded proteins, including at least some of the essential transmembrane subunits of the mitochondrial respiratory chain. The mitoribosomes are attached to the mitochondrial inner membrane and translation products are cotranslationally integrated into the membrane. The polypeptide is Large ribosomal subunit protein uL22m (mrpl22) (Schizosaccharomyces pombe (strain 972 / ATCC 24843) (Fission yeast)).